Consider the following 310-residue polypeptide: Inner membrane protein YfdC (310 aa).

The segment covering 1-12 (MDNDKIDQHSDE) has biased composition (basic and acidic residues). A disordered region spans residues 1-27 (MDNDKIDQHSDEIEVESEEKERGKKIE). The Cytoplasmic segment spans residues 1–58 (MDNDKIDQHSDEIEVESEEKERGKKIEIDEDRLPSRAMAIHEHIRQDGEKELERDAMA). Residues 59–81 (LLWSAIAAGLSMGASLLAKGIFQ) form a helical membrane-spanning segment. Over 82 to 90 (VELEGVPGS) the chain is Periplasmic. Residues 91–113 (FLLENLGYTFGFIIVIMARQQLF) traverse the membrane as a helical segment. Residues 114–133 (TENTVTAVLPVMQKPTMSNV) lie on the Cytoplasmic side of the membrane. Residues 134-156 (GLLIRLWGVVLLGNILGTGIAAW) form a helical membrane-spanning segment. Topologically, residues 157 to 186 (AFEYMPIFNEETRDAFVKIGMDVMKNTPSE) are periplasmic. The chain crosses the membrane as a helical span at residues 187 to 206 (MFANAIISGWLIATMVWMFP). Over 207 to 212 (AAGAAK) the chain is Cytoplasmic. The helical transmembrane segment at 213-232 (IVVIILMTWLIALGDTTHIV) threads the bilayer. At 233-251 (VGSVEILYLVFNGTLHWSD) the chain is on the periplasmic side. The chain crosses the membrane as a helical span at residues 252 to 274 (FIWPFALPTLAGNICGGTFIFAL). The Cytoplasmic portion of the chain corresponds to 275–310 (MSHAQIRNDMSNKRKAEARQKAERAENIKKNYKNPA). The segment covering 291-303 (EARQKAERAENIK) has biased composition (basic and acidic residues). A disordered region spans residues 291–310 (EARQKAERAENIKKNYKNPA).

The protein localises to the cell inner membrane. The chain is Inner membrane protein YfdC (yfdC) from Escherichia coli (strain K12).